A 362-amino-acid polypeptide reads, in one-letter code: Phosphoserine aminotransferase (362 aa).

L-glutamate-binding residues include Ser-9 and Arg-42. Pyridoxal 5'-phosphate contacts are provided by residues Gly-76 to Arg-77, Trp-102, Thr-153, Asp-174, and Gln-197. At Lys-198 the chain carries N6-(pyridoxal phosphate)lysine. Asn-239–Thr-240 serves as a coordination point for pyridoxal 5'-phosphate.

The protein belongs to the class-V pyridoxal-phosphate-dependent aminotransferase family. SerC subfamily. Homodimer. The cofactor is pyridoxal 5'-phosphate.

It is found in the cytoplasm. The enzyme catalyses O-phospho-L-serine + 2-oxoglutarate = 3-phosphooxypyruvate + L-glutamate. It catalyses the reaction 4-(phosphooxy)-L-threonine + 2-oxoglutarate = (R)-3-hydroxy-2-oxo-4-phosphooxybutanoate + L-glutamate. It participates in amino-acid biosynthesis; L-serine biosynthesis; L-serine from 3-phospho-D-glycerate: step 2/3. The protein operates within cofactor biosynthesis; pyridoxine 5'-phosphate biosynthesis; pyridoxine 5'-phosphate from D-erythrose 4-phosphate: step 3/5. Catalyzes the reversible conversion of 3-phosphohydroxypyruvate to phosphoserine and of 3-hydroxy-2-oxo-4-phosphonooxybutanoate to phosphohydroxythreonine. This Salmonella choleraesuis (strain SC-B67) protein is Phosphoserine aminotransferase.